The sequence spans 1158 residues: Teashirt homolog 1 (1158 aa).

Disordered stretches follow at residues 70–126 (DDGR…DMDT), 170–228 (INST…ANNG), and 310–341 (TGHYRDDNKDKEEDRGKKWSKPRKRSLMEMEG). Over residues 76-88 (LSYQNSPLSNGTN) the composition is skewed to polar residues. Low complexity-rich tracts occupy residues 186–205 (SHASTIASSGASSSSNASAS) and 213–228 (SSNSTKATTLTNANNG). C2H2-type zinc fingers lie at residues 288–312 (FRCKDCSAAYDTLVGLTVHMNETGH) and 349–373 (LKCMYCGHSFESLQDLSVHMIKTKH). Residues 310–326 (TGHYRDDNKDKEEDRGK) are compositionally biased toward basic and acidic residues. The tract at residues 405-425 (PCSPDSISSTPGIPLAETAPT) is disordered. The C2H2-type 3 zinc finger occupies 461-485 (LKCMECGSSHDTLQQLTAHMMVTGH). Disordered regions lie at residues 516–573 (PPTT…VEKS), 656–681 (LKSLTSDSSTLIHSPSSPSPPPNHKS), and 693–748 (VTGK…VDKD). A compositionally biased stretch (basic and acidic residues) spans 555-573 (EEKKIKQEKEDPSERVEKS). The segment covering 656-671 (LKSLTSDSSTLIHSPS) has biased composition (low complexity). Composition is skewed to basic and acidic residues over residues 693–716 (VTGKIPSKKDRDEKLTERNSKHLT) and 724–748 (LKERKDLPKPDDLTKPTKNGTVDKD). Positions 963–1033 (RKGRQSNWNP…NVKYQLRRTG (71 aa)) form a DNA-binding region, homeobox. C2H2-type zinc fingers lie at residues 1048–1070 (FLCSDCASQFRTPSTYINHLESH) and 1115–1138 (FQCKLCNRTFVSKHAVKLHLSKTH).

This sequence belongs to the teashirt C2H2-type zinc-finger protein family.

The protein resides in the nucleus. In terms of biological role, probable transcriptional regulator involved in developmental processes. May act as a transcriptional repressor (Potential). The polypeptide is Teashirt homolog 1 (tshz1) (Danio rerio (Zebrafish)).